Here is a 348-residue protein sequence, read N- to C-terminus: tRNA N6-adenosine threonylcarbamoyltransferase (348 aa).

2 residues coordinate Fe cation: H116 and H120. Substrate-binding positions include 138–142 (IISGG), D171, G184, and N282. D310 is a Fe cation binding site.

It belongs to the KAE1 / TsaD family. It depends on Fe(2+) as a cofactor.

The protein localises to the cytoplasm. The enzyme catalyses L-threonylcarbamoyladenylate + adenosine(37) in tRNA = N(6)-L-threonylcarbamoyladenosine(37) in tRNA + AMP + H(+). Functionally, required for the formation of a threonylcarbamoyl group on adenosine at position 37 (t(6)A37) in tRNAs that read codons beginning with adenine. Is involved in the transfer of the threonylcarbamoyl moiety of threonylcarbamoyl-AMP (TC-AMP) to the N6 group of A37, together with TsaE and TsaB. TsaD likely plays a direct catalytic role in this reaction. The protein is tRNA N6-adenosine threonylcarbamoyltransferase of Ehrlichia ruminantium (strain Welgevonden).